The primary structure comprises 852 residues: Cell surface glycoprotein (852 aa).

A signal peptide spans 1–34 (MTDTTGKLRAVLLTALMVGSVIGAGVAFTGGAAA). An N-linked (GalNAc...) (glycosaminoglycan) asparagine glycan is attached at asparagine 36. Positions 84–131 (KLDNEKEVSPATLSRTGGSDEGVPLQMPIPEDQSTGSYDSNGPDNDEA) are disordered. Positions 115 to 126 (DQSTGSYDSNGP) are enriched in polar residues. N-linked (Glc...) asparagine glycosylation is found at asparagine 339, asparagine 398, asparagine 438, asparagine 513, asparagine 643, asparagine 727, asparagine 751, and asparagine 787. Positions 772–828 (ELEEPDQTTVDQPENNQTMTTTMTETTTETTTEMTTTQENTTENGSEGTSDGESGGS) are disordered. Residues 785 to 823 (ENNQTMTTTMTETTTETTTEMTTTQENTTENGSEGTSDG) are compositionally biased toward low complexity. O-linked (Gal...) threonine glycans are attached at residues threonine 789, threonine 791, threonine 792, threonine 793, threonine 795, threonine 797, threonine 798, threonine 799, threonine 801, threonine 802, threonine 803, threonine 806, threonine 807, and threonine 808. Asparagine 811 carries an N-linked (Glc...) asparagine glycan. 2 O-linked (Gal...) threonine glycosylation sites follow: threonine 812 and threonine 813. N-linked (Glc...) asparagine glycosylation occurs at asparagine 815. A helical membrane pass occupies residues 829–849 (IPGFGVGVALVAVLGAALLAL). The PGF sorting signal motif lies at 830–832 (PGF).

Belongs to the halobacterial S-layer protein family. In terms of processing, N-linked glycan at Asn-36 consists of a glycosaminoglycan chain, constructed by a repeating sulfated pentasaccharide block composed of GlcNAc, GalNAc, Gal, GalA, 3-O-methyl-GalA, and sulfate in the molar ratio of 1:1:1:1:1:2; the other N-linked glycans contain Glc, GlcA and IdoA. O-linked glycans consist of Glc-Gal disaccharides. Post-translationally, the C-terminus (residues 770-778) is lipidated with diphytanylglyceryl phosphate. In terms of processing, cleaved by the archaeosortase ArtA at the C-terminus, with removal of a short hydrophobic segment.

It is found in the secreted. Its subcellular location is the cell wall. It localises to the S-layer. The protein resides in the cell membrane. S-layer protein. The S-layer is a paracrystalline mono-layered assembly of proteins which coat the surface of the cell. This Halobacterium salinarum (strain ATCC 29341 / DSM 671 / R1) protein is Cell surface glycoprotein (csg).